We begin with the raw amino-acid sequence, 730 residues long: Polyribonucleotide nucleotidyltransferase (730 aa).

Positions 494 and 500 each coordinate Mg(2+). The KH domain occupies 561 to 622 (PRIQTIQIDP…EAMNRAIQEI (62 aa)). Residues 642-711 (GKIYTGRVTG…RSGKVRLSRK (70 aa)) form the S1 motif domain.

It belongs to the polyribonucleotide nucleotidyltransferase family. Mg(2+) is required as a cofactor.

It is found in the cytoplasm. It catalyses the reaction RNA(n+1) + phosphate = RNA(n) + a ribonucleoside 5'-diphosphate. In terms of biological role, involved in mRNA degradation. Catalyzes the phosphorolysis of single-stranded polyribonucleotides processively in the 3'- to 5'-direction. The protein is Polyribonucleotide nucleotidyltransferase of Opitutus terrae (strain DSM 11246 / JCM 15787 / PB90-1).